The following is a 397-amino-acid chain: Subtilisin-like protease 3 (397 aa).

Positions 1-19 (MGCIKVISVFLAAIAAVDA) are cleaved as a signal peptide. Residues 20-116 (RAFFHNRGGS…VEHDRVVKLA (97 aa)) constitute a propeptide that is removed on maturation. The region spanning 35–116 (SYIVVMKDGV…VEHDRVVKLA (82 aa)) is the Inhibitor I9 domain. A Peptidase S8 domain is found at 126–397 (TWGLGRVSHR…NRLLYNGSGQ (272 aa)). Active-site charge relay system residues include Asp158 and His189. N-linked (GlcNAc...) asparagine glycosylation occurs at Asn250. Ser344 acts as the Charge relay system in catalysis. Asn393 carries N-linked (GlcNAc...) asparagine glycosylation.

It belongs to the peptidase S8 family.

It localises to the secreted. Secreted subtilisin-like serine protease with keratinolytic activity that contributes to pathogenicity. The protein is Subtilisin-like protease 3 (SUB3) of Trichophyton tonsurans (Scalp ringworm fungus).